We begin with the raw amino-acid sequence, 1220 residues long: Myosin-2 (1220 aa).

The span at 1–12 shows a compositional bias: polar residues; sequence MMLSASPNTLAK. 2 disordered regions span residues 1–54 and 68–95; these read MMLS…ARRS and QNGSVVSVTPAVEAESERKEEGVKRKEK. The span at 20 to 33 shows a compositional bias: basic and acidic residues; the sequence is ESLRQKDECDRPKD. The segment covering 40-54 has biased composition (low complexity); that stretch reads SRPNSRARLPSARRS. A compositionally biased stretch (basic and acidic residues) spans 82–95; the sequence is ESERKEEGVKRKEK. A Myosin N-terminal SH3-like domain is found at 160–209; it reads KKKLRVWCRVSNGQWQLGKIQSTSADTSLVMLSTANVVKVSTEELFPANP. Positions 213–879 constitute a Myosin motor domain; it reads EGVEDLIQLS…QIGIFEDRRK (667 aa). ATP is bound by residues 304–311 and 353–361; these read GESGAGKT and NANSSRFGK. Actin-binding regions lie at residues 638-672 and 759-781; these read LIEKKPIGLLSLLDEESNFPKATDLTFANKLKQHL and LFKLMNKLENTSPHFIRCIKPNS. IQ domains follow at residues 881-910, 904-933, and 942-971; these read VLQGIVGLQKHFRGHLSRAYFQNMRKVTLV, MRKVTLVLQSYIRGENARRLFDTEAKFHAD, and ELSAVIHLQSAVRGWLARKHFNSMQRQKEL. 2 disordered regions span residues 968 to 1007 and 1075 to 1118; these read QKELRNVATKSKRKAGRRISEDKDIPLEQPQVQPTSMSDL and SITG…NGNT. 2 stretches are compositionally biased toward polar residues: residues 997–1006 and 1098–1118; these read PQVQPTSMSD and TMSTGTPGVRTPTNKFTNGNT. A coiled-coil region spans residues 1003 to 1071; the sequence is SMSDLQKRIL…MSLAAARKSL (69 aa).

Belongs to the TRAFAC class myosin-kinesin ATPase superfamily. Myosin family. Plant myosin class VIII subfamily. Homodimer. As to expression, expressed in flowers, leaves and roots.

The protein resides in the cell junction. It is found in the plasmodesma. It localises to the endosome. Functionally, myosin heavy chain that is required for the cell cycle-regulated transport of various organelles and proteins for their segregation. Functions by binding with its tail domain to receptor proteins on organelles and exerting force with its N-terminal motor domain against actin filaments, thereby transporting its cargo along polarized actin cables. Involved in endocytosis via its action in endosomal trafficking. In Arabidopsis thaliana (Mouse-ear cress), this protein is Myosin-2 (VIII-2).